The sequence spans 758 residues: 5-methyltetrahydropteroyltriglutamate--homocysteine methyltransferase (758 aa).

5-methyltetrahydropteroyltri-L-glutamate contacts are provided by residues 17-20 and lysine 110; that span reads RELK. L-homocysteine contacts are provided by residues 428–430 and glutamate 481; that span reads IGS. Residues 428–430 and glutamate 481 each bind L-methionine; that span reads IGS. Residues 512-513 and tryptophan 558 contribute to the 5-methyltetrahydropteroyltri-L-glutamate site; that span reads RC. Residue aspartate 596 coordinates L-homocysteine. Aspartate 596 lines the L-methionine pocket. Position 602 (glutamate 602) interacts with 5-methyltetrahydropteroyltri-L-glutamate. 3 residues coordinate Zn(2+): histidine 638, cysteine 640, and glutamate 662. Histidine 691 serves as the catalytic Proton donor. Cysteine 723 is a Zn(2+) binding site.

It belongs to the vitamin-B12 independent methionine synthase family. It depends on Zn(2+) as a cofactor.

It carries out the reaction 5-methyltetrahydropteroyltri-L-glutamate + L-homocysteine = tetrahydropteroyltri-L-glutamate + L-methionine. Its pathway is amino-acid biosynthesis; L-methionine biosynthesis via de novo pathway; L-methionine from L-homocysteine (MetE route): step 1/1. Its function is as follows. Catalyzes the transfer of a methyl group from 5-methyltetrahydrofolate to homocysteine resulting in methionine formation. The protein is 5-methyltetrahydropteroyltriglutamate--homocysteine methyltransferase of Thermosynechococcus vestitus (strain NIES-2133 / IAM M-273 / BP-1).